The chain runs to 243 residues: tRNA pseudouridine synthase A (243 aa).

The Nucleophile role is filled by Asp53. Tyr111 serves as a coordination point for substrate.

The protein belongs to the tRNA pseudouridine synthase TruA family. Homodimer.

It carries out the reaction uridine(38/39/40) in tRNA = pseudouridine(38/39/40) in tRNA. In terms of biological role, formation of pseudouridine at positions 38, 39 and 40 in the anticodon stem and loop of transfer RNAs. The chain is tRNA pseudouridine synthase A from Pelodictyon phaeoclathratiforme (strain DSM 5477 / BU-1).